The following is a 200-amino-acid chain: High mobility group protein B3 (200 aa).

Lys-3 bears the N6-acetyllysine mark. DNA-binding regions (HMG box) lie at residues 9–79 and 93–161; these read PKGK…KDYG and PKRP…ADYK. At Cys-23 the chain carries Cysteine sulfonic acid (-SO3H); alternate. Cys-23 and Cys-45 are disulfide-bonded. N6-acetyllysine occurs at positions 30 and 43. Cys-45 bears the Cysteine sulfonic acid (-SO3H); alternate mark. Residues 71 to 97 are disordered; sequence YDREMKDYGPAKGGKKKKDPNAPKRPP. The residue at position 98 (Ser-98) is a Phosphoserine. Cys-104 is modified (cysteine sulfonic acid (-SO3H)). N6-acetyllysine is present on residues Lys-112 and Lys-139. Residues 161–200 are disordered; that stretch reads KSKGKFDGAKGPAKVARKKVEEEEEEEEEEEEEEEEEEDE. Positions 182 to 200 are enriched in acidic residues; the sequence is EEEEEEEEEEEEEEEEEDE.

Belongs to the HMGB family. In terms of processing, reduction/oxidation of cysteine residues Cys-23, Cys-45 and Cys-104 and a possible intramolecular disulfide bond involving Cys-23 and Cys-45 give rise to different redox forms with specific functional activities in various cellular compartments: 1- fully reduced HMGB3 (HMGB3C23hC45hC104h), 2- disulfide HMGB3 (HMGB3C23-C45C104h) and 3- sulfonyl HMGB3 (HMGB3C23soC45soC104so). In terms of tissue distribution, expressed in bone marrow cells, specifically in primitive Lin-, c-kit+, Sca-1+, IL-7Ralpha- cells, and Ter119+ erythroid cells.

The protein resides in the nucleus. It is found in the chromosome. Its subcellular location is the cytoplasm. Functionally, multifunctional protein with various roles in different cellular compartments. May act in a redox sensitive manner. Associates with chromatin and binds DNA with a preference for non-canonical DNA structures such as single-stranded DNA. Can bend DNA and enhance DNA flexibility by looping thus providing a mechanism to promote activities on various gene promoters. Proposed to be involved in the innate immune response to nucleic acids by acting as a cytoplasmic promiscuous immunogenic DNA/RNA sensor. Negatively regulates B-cell and myeloid cell differentiation. In hematopoietic stem cells may regulate the balance between self-renewal and differentiation. Involved in negative regulation of canonical Wnt signaling. This is High mobility group protein B3 (Hmgb3) from Mus musculus (Mouse).